Consider the following 711-residue polypeptide: Ferric/cupric reductase transmembrane component 2 (711 aa).

The first 23 residues, 1–23 (MHWTSILSAILLFCLSGARASPA), serve as a signal peptide directing secretion. Residues 24 to 164 (KTVIRNKVPL…GFYANLDVGN (141 aa)) lie on the Extracellular side of the membrane. 4 N-linked (GlcNAc...) asparagine glycosylation sites follow: asparagine 85, asparagine 108, asparagine 120, and asparagine 134. A helical transmembrane segment spans residues 165-185 (IYGGIICAYFVAIMAFAGVLH). At 186–235 (CMNYTPFKTVLLKQKLVGYVRGYLTLPTIGSKHASDFSYFRIFTGYLPTR) the chain is on the cytoplasmic side. A helical transmembrane segment spans residues 236-256 (LEGIIILGYLVLHTVFLAYGY). The Extracellular portion of the chain corresponds to 257 to 280 (EYDPENIIFKSRRVQVARYVADRS). In terms of domain architecture, Ferric oxidoreductase spans 280–414 (SGVLAFAHFP…SGIEWIYTAI (135 aa)). The helical transmembrane segment at 281 to 301 (GVLAFAHFPLIVLFAGRNNFL) threads the bilayer. Topologically, residues 302-317 (EYISGVKYTSFIMFHK) are cytoplasmic. The heme site is built by histidine 316 and histidine 330. The chain crosses the membrane as a helical span at residues 318-340 (WLGRMMFLDAMIHGSAYTSYTVA). A glycan (N-linked (GlcNAc...) asparagine) is linked at asparagine 341. Over 341–353 (NKTWATSKNRLYW) the chain is Extracellular. The helical transmembrane segment at 354 to 374 (QFGVAALCLAGTMVFFSFAVF) threads the bilayer. Over 375–377 (RKY) the chain is Cytoplasmic. A helical transmembrane segment spans residues 378–398 (FYEAFLFLHIVLGAMFFYACW). Heme contacts are provided by histidine 386 and histidine 400. The Extracellular portion of the chain corresponds to 399–400 (EH). Residues 401–423 (VVSLSGIEWIYTAIAIWIVDRII) form a helical membrane-spanning segment. The FAD-binding FR-type domain occupies 415–534 (AIWIVDRIIR…EGPYGSSSPV (120 aa)). Residues 424–711 (RIIKASYFGF…IEYFEEYQCW (288 aa)) lie on the Cytoplasmic side of the membrane. Residue 479–485 (HPFTVLD) participates in FAD binding. Residues 526–529 (GPYG) and 677–678 (CG) each bind NADP(+).

It belongs to the ferric reductase (FRE) family. Requires FAD as cofactor. Heme is required as a cofactor.

The protein localises to the cell membrane. The catalysed reaction is 2 a Fe(II)-siderophore + NADP(+) + H(+) = 2 a Fe(III)-siderophore + NADPH. Metalloreductase responsible for reducing extracellular iron and copper prior to import. Catalyzes the reductive uptake of Fe(3+)-salts and Fe(3+) bound to catecholate or hydroxamate siderophores. Fe(3+) is reduced to Fe(2+), which then dissociates from the siderophore and can be imported by the high-affinity Fe(2+) transport complex in the plasma membrane. Also participates in Cu(2+) reduction and Cu(+) uptake. The chain is Ferric/cupric reductase transmembrane component 2 (FRE2) from Saccharomyces cerevisiae (strain ATCC 204508 / S288c) (Baker's yeast).